The chain runs to 401 residues: MEEQQPEPKSQRDSGLGAVAAAAPSGLSLSLSPGASGSSGSDGDSVPVSPQPAPPSPPAAPCLPPLAHHPHLPPHPPPPPPPPPPPPQHLAAPAHQPQPAAQLHRTTNFFIDNILRPDFGCKKEQPLPQLLVASAAAGGGAAAGGGSRVERDRGQTGAGRDPVHSLGTRASGAASLLCAPDANCGPPDGSQPATAVSAGASKAGNPAAAAAAAAAAAAAAVAAAAAAASKPSDSGGGSGGNAGSPGAQGAKFPEHNPAILLMGSANGGPVVKTDSQQPLVWPAWVYCTRYSDRPSSGPRTRKLKKKKNEKEDKRPRTAFTAEQLQRLKAEFQANRYITEQRRQTLAQELSLNESQIKIWFQNKRAKIKKATGIKNGLALHLMAQGLYNHSTTTVQDKDESE.

Disordered regions lie at residues 1 to 102 (MEEQ…PAAQ), 138 to 167 (GGGA…HSLG), 229 to 253 (SKPS…AKFP), and 293 to 315 (RPSS…DKRP). The segment covering 13-48 (DSGLGAVAAAAPSGLSLSLSPGASGSSGSDGDSVPV) has biased composition (low complexity). 2 stretches are compositionally biased toward pro residues: residues 49 to 64 (SPQP…PCLP) and 73 to 88 (PPHP…PPPQ). Residues 89 to 102 (HLAAPAHQPQPAAQ) are compositionally biased toward low complexity. Composition is skewed to gly residues over residues 138-147 (GGGAAAGGGS) and 234-243 (SGGGSGGNAG). Residues 312 to 371 (DKRPRTAFTAEQLQRLKAEFQANRYITEQRRQTLAQELSLNESQIKIWFQNKRAKIKKAT) constitute a DNA-binding region (homeobox).

This sequence belongs to the engrailed homeobox family.

The protein resides in the nucleus. Functionally, required for proper formation of the apical ectodermal ridge and correct dorsal-ventral patterning in the limb. The chain is Homeobox protein engrailed-1 (En1) from Mus musculus (Mouse).